A 400-amino-acid chain; its full sequence is WW domain-containing transcription regulator protein 1 (400 aa).

K46 is covalently cross-linked (Glycyl lysine isopeptide (Lys-Gly) (interchain with G-Cter in ubiquitin)). Positions 52–117 (FFKEPDSGSH…QQHAHLRQQS (66 aa)) are disordered. Positions 61-70 (HSRQSSTDSS) are enriched in polar residues. S62 bears the Phosphoserine mark. S89 carries the phosphoserine; by LATS2 modification. S105 carries the post-translational modification Phosphoserine. Residues 124-157 (LPLPPGWEMTFTATGQRYFLNHIEKITTWQDPRK) form the WW domain. A required for interaction with PALS1 region spans residues 222–400 (PNALTTQQQQ…NKSEPFLTWL (179 aa)). Positions 225–259 (LTTQQQQQQKLRLQRIQMERERIRMRQEELMRQEA) form a coiled coil. A Phosphoserine modification is found at S295. S311 bears the Phosphoserine; by LATS2 mark. Positions 394 to 400 (EPFLTWL) match the PDZ-binding motif.

As to quaternary structure, binds to SLC9A3R2 via the PDZ motif at the plasma membrane. Binds to YWHAZ in vivo and in vitro through the phosphoserine-binding motif RSHSSP. Interacts (via coiled-coil domain) with SMAD2 (via MH1 domain), SMAD3 and SMAD4. Interacts with MED15. Interacts with PAX8 and NKX2-1. Interacts with TEAD1, TEAD2, TEAD3 and TEAD4. Interacts (via WW domain) with PALS1. Interacts with LATS1. Interacts with YAP1 (when phosphorylated at 'Ser-127'). Interacts (via WW domain) with PRRG4 (via cytoplasmic domain). Interacts (via WW domain) with AMOTL2 (via PPXY motif); the interaction promotes WWTR1/TAZ localization to the cytoplasm and tight junctions, thereby inhibiting its transcriptional coactivator properties. Interacts (via WW domain) with AMOT isoform 1; the interaction facilitates translocation of WWTR1/TAZ to the cytoplasm. In terms of processing, phosphorylated by LATS2 and STK3/MST2. Phosphorylation by LATS2 results in creation of 14-3-3 binding sites, retention in the cytoplasm, and functional inactivation. Phosphorylation results in the inhibition of transcriptional coactivation through YWHAZ-mediated nuclear export. Phosphorylated in the nucleus by PRP4K; phosphorylation leads to nuclear exclusion. Ubiquitinated at Lys-46; leading to proteasomal degradation. Deubiquitinated and stabilized by UCHL1 at Lys-46; leading to inhibition of osteoclastogenesis. In terms of tissue distribution, highly expressed in kidney, heart, placenta and lung. Expressed in the thyroid tissue.

It localises to the nucleus. Its subcellular location is the cytoplasm. It is found in the cell membrane. The protein resides in the cell junction. The protein localises to the tight junction. Its function is as follows. Transcriptional coactivator which acts as a downstream regulatory target in the Hippo signaling pathway that plays a pivotal role in organ size control and tumor suppression by restricting proliferation and promoting apoptosis. The core of this pathway is composed of a kinase cascade wherein STK3/MST2 and STK4/MST1, in complex with its regulatory protein SAV1, phosphorylates and activates LATS1/2 in complex with its regulatory protein MOB1, which in turn phosphorylates and inactivates YAP1 oncoprotein and WWTR1/TAZ. WWTR1 enhances PAX8 and NKX2-1/TTF1-dependent gene activation. In conjunction with YAP1, involved in the regulation of TGFB1-dependent SMAD2 and SMAD3 nuclear accumulation. Plays a key role in coupling SMADs to the transcriptional machinery such as the mediator complex. Regulates embryonic stem-cell self-renewal, promotes cell proliferation and epithelial-mesenchymal transition. The chain is WW domain-containing transcription regulator protein 1 from Homo sapiens (Human).